Reading from the N-terminus, the 227-residue chain is MSAPTGQPAYVLHSRAYRENSALVDFLTPQGRLRAVLRSAKGKAGSLARPFVPLEVEFRGRGELKNVGRMESAGVATWMTGEALFSGMYLNELLIRLLPAEDPHPAVFEHYAATLLALALGRPLEPLLRSFEWRLLDDLGYGFAMDADINGEPLAIDGMYRLQVDAGLERVYLLQPGLFQGAELLAMSEADWSVPGALSAAKRLMRQALAVHLGGRPLVSRELFRKP.

This sequence belongs to the RecO family.

Involved in DNA repair and RecF pathway recombination. This chain is DNA repair protein RecO, found in Pseudomonas savastanoi pv. phaseolicola (strain 1448A / Race 6) (Pseudomonas syringae pv. phaseolicola (strain 1448A / Race 6)).